The sequence spans 48 residues: Disintegrin leucogastin-A (48 aa).

Residues 1 to 47 (DCASGPCCRDCKFLEEFTICNMARGDDMNDYCNGKTCDCPRNPHKWP) form the Disintegrin domain. 4 cysteine pairs are disulfide-bonded: Cys2/Cys11, Cys7/Cys32, Cys8/Cys37, and Cys20/Cys39. A Cell attachment site motif is present at residues 24-26 (RGD).

The protein belongs to the venom metalloproteinase (M12B) family. P-II subfamily. P-IIa sub-subfamily. As to quaternary structure, monomer (disintegrin). In terms of tissue distribution, expressed by the venom gland.

The protein resides in the secreted. Its function is as follows. Inhibits ADP-induced human platelet aggregation. In Echis leucogaster (Roman's saw-scaled viper), this protein is Disintegrin leucogastin-A.